A 360-amino-acid polypeptide reads, in one-letter code: Pyrimidine monooxygenase RutA (360 aa).

FMN contacts are provided by residues 49–50 (IK), Asn115, Glu124, 140–141 (RY), and Ser190.

The protein belongs to the NtaA/SnaA/DszA monooxygenase family. RutA subfamily.

It carries out the reaction uracil + FMNH2 + NADH + O2 = (Z)-3-ureidoacrylate + FMN + NAD(+) + H2O + H(+). The catalysed reaction is thymine + FMNH2 + NADH + O2 = (Z)-2-methylureidoacrylate + FMN + NAD(+) + H2O + H(+). Functionally, catalyzes the pyrimidine ring opening between N-3 and C-4 by an unusual flavin hydroperoxide-catalyzed mechanism, adding oxygen atoms in the process to yield ureidoacrylate peracid, that immediately reacts with FMN forming ureidoacrylate and FMN-N(5)-oxide. The FMN-N(5)-oxide reacts spontaneously with NADH to produce FMN. Requires the flavin reductase RutF to regenerate FMN in vivo. The chain is Pyrimidine monooxygenase RutA from Pseudomonas syringae pv. syringae (strain B728a).